An 85-amino-acid polypeptide reads, in one-letter code: Acyl carrier protein (85 aa).

The region spanning 2-78 is the Carrier domain; sequence SQISERVIDL…DAIAYIESHA (77 aa). Position 37 is an O-(pantetheine 4'-phosphoryl)serine (S37).

Belongs to the acyl carrier protein (ACP) family. Post-translationally, 4'-phosphopantetheine is transferred from CoA to a specific serine of apo-ACP by AcpS. This modification is essential for activity because fatty acids are bound in thioester linkage to the sulfhydryl of the prosthetic group.

It is found in the cytoplasm. It participates in lipid metabolism; fatty acid biosynthesis. Its function is as follows. Carrier of the growing fatty acid chain in fatty acid biosynthesis. The protein is Acyl carrier protein of Azobacteroides pseudotrichonymphae genomovar. CFP2.